The primary structure comprises 643 residues: 1-deoxy-D-xylulose-5-phosphate synthase (643 aa).

Thiamine diphosphate-binding positions include His78 and 119–121 (AHS). Asp150 contacts Mg(2+). Residues 151-152 (GS), Asn179, Tyr288, and Glu370 each bind thiamine diphosphate. Position 179 (Asn179) interacts with Mg(2+).

Belongs to the transketolase family. DXPS subfamily. In terms of assembly, homodimer. Mg(2+) is required as a cofactor. Thiamine diphosphate serves as cofactor.

The catalysed reaction is D-glyceraldehyde 3-phosphate + pyruvate + H(+) = 1-deoxy-D-xylulose 5-phosphate + CO2. Its pathway is metabolic intermediate biosynthesis; 1-deoxy-D-xylulose 5-phosphate biosynthesis; 1-deoxy-D-xylulose 5-phosphate from D-glyceraldehyde 3-phosphate and pyruvate: step 1/1. In terms of biological role, catalyzes the acyloin condensation reaction between C atoms 2 and 3 of pyruvate and glyceraldehyde 3-phosphate to yield 1-deoxy-D-xylulose-5-phosphate (DXP). This chain is 1-deoxy-D-xylulose-5-phosphate synthase, found in Brucella abortus (strain S19).